A 284-amino-acid polypeptide reads, in one-letter code: Digeranylgeranylglyceryl phosphate synthase (284 aa).

The next 7 membrane-spanning stretches (helical) occupy residues 10–30 (IHNV…SSMW), 37–57 (LILA…INDV), 76–98 (AVSL…ILSA), 102–119 (YLQF…IFYA), 126–146 (GIYG…YGGL), 217–237 (LPLF…FLYI), and 260–280 (GSAF…QFLF).

The protein belongs to the UbiA prenyltransferase family. DGGGP synthase subfamily. The cofactor is Mg(2+).

Its subcellular location is the cell membrane. The catalysed reaction is sn-3-O-(geranylgeranyl)glycerol 1-phosphate + (2E,6E,10E)-geranylgeranyl diphosphate = 2,3-bis-O-(geranylgeranyl)-sn-glycerol 1-phosphate + diphosphate. It functions in the pathway membrane lipid metabolism; glycerophospholipid metabolism. Prenyltransferase that catalyzes the transfer of the geranylgeranyl moiety of geranylgeranyl diphosphate (GGPP) to the C2 hydroxyl of (S)-3-O-geranylgeranylglyceryl phosphate (GGGP). This reaction is the second ether-bond-formation step in the biosynthesis of archaeal membrane lipids. The chain is Digeranylgeranylglyceryl phosphate synthase from Metallosphaera sedula (strain ATCC 51363 / DSM 5348 / JCM 9185 / NBRC 15509 / TH2).